Here is a 165-residue protein sequence, read N- to C-terminus: RxLR effector protein PITG_09218 (165 aa).

Positions 1–24 (MRFSAFLTLLLVAFVASCSTFASA) are cleaved as a signal peptide. The short motif at 31-57 (RRLRADAAPVPVNKDNVAKLAGGFLEK) is the RxLR-dEER element. Residues 129 to 149 (VTLGATVAGFAIYGAYKALFD) traverse the membrane as a helical segment.

The protein belongs to the RxLR effector family.

Its subcellular location is the secreted. It is found in the host mitochondrion membrane. It localises to the host endoplasmic reticulum membrane. Its function is as follows. Effector that enhances P.infestans colonization of Nicotiana benthamiana leaves. The polypeptide is RxLR effector protein PITG_09218 (Phytophthora infestans (strain T30-4) (Potato late blight agent)).